Reading from the N-terminus, the 468-residue chain is MKINSPLEAYKYLPQTNCGECGEATCMAFASKLIDRSGKTSDCPPLIKEKKFAKKLAELDRLLAPEIRQVTIGVGEKAVNIGGDDVLYRHKLTFFNKTKMFFDVADNMDEAALVERVNSIANFRKFYVGRNLLLDGVAIRAVSNDPAKFAAAVKKVAEAGLPMIFCSFNPAVLKAGLEAAKDLKPLLYAANKDNWKEVGELAIEYKVPVVVSAFNDLDALKTLAKTYAEAGIKDIVLDPGTYPTGKGLKDTFTNFLKIRRAGIMGDTEIAYPIMALPFTAWMAGIADPVSASYWETVMASVFTIRYGDIMILHSLEPYATLPEVHLAETIYTDPRTPVSVDGGMYKVGSPTADSPVLFTTNFALTYYTVESDISSNGIDCWLLAVDTDGIGVEAAVAGGQLTADKVKDAFDKAGFDLKTAVNHNTVVTPGLAARLQGDLEDKLGANVKVGPMDSGRIPGWMEKNWPPK.

The region spanning 1–60 is the 4Fe-4S domain; that stretch reads MKINSPLEAYKYLPQTNCGECGEATCMAFASKLIDRSGKTSDCPPLIKEKKFAKKLAELD. [4Fe-4S] cluster contacts are provided by C18, C21, C26, and C43.

In terms of assembly, heterodimer of delta and gamma chains. The ACDS complex is made up of alpha, epsilon, beta, gamma and delta chains with a probable stoichiometry of (alpha(2)epsilon(2))(4)-beta(8)-(gamma(1)delta(1))(8). The cofactor is corrinoid. Requires [4Fe-4S] cluster as cofactor.

It catalyses the reaction 5,6,7,8-tetrahydrosarcinapterin + methyl-Co(III)-[corrinoid Fe-S protein] = 5-methyltetrahydrosarcinapterin + Co(I)-[corrinoid Fe-S protein] + H(+). It functions in the pathway one-carbon metabolism; methanogenesis from acetate. Part of a complex that catalyzes the reversible cleavage of acetyl-CoA, allowing growth on acetate as sole source of carbon and energy. The chain is Acetyl-CoA decarbonylase/synthase complex subunit gamma from Methanosarcina acetivorans (strain ATCC 35395 / DSM 2834 / JCM 12185 / C2A).